The primary structure comprises 598 residues: Autophagy-related protein 22-1 (598 aa).

Residues 1–20 (MEDGGAGLRAPRYPAEDTSP) are disordered. The helical transmembrane segment at 28–48 (GFFCYGLAAEVFAVCAVGSFL) threads the bilayer. N74 and N80 each carry an N-linked (GlcNAc...) asparagine glycan. Helical transmembrane passes span 111-131 (SFAMYTFSASVFMQALALVSV), 159-179 (FLLVVPQIFVVGSFLTVICVV), and 182-202 (GCSFVILNSYLPLLVLNHPVV). A disordered region spans residues 207-238 (DHPTASSSIPLQPISPQRSSRKSEESLHQVNR). Residues 212–224 (SSSIPLQPISPQR) show a composition bias toward low complexity. The span at 227-238 (RKSEESLHQVNR) shows a compositional bias: basic and acidic residues. The chain crosses the membrane as a helical span at residues 263–283 (VGIGYMAAVSVQVICILILYI). The N-linked (GlcNAc...) asparagine glycan is linked to N285. A run of 7 helical transmembrane segments spans residues 297-317 (TVLFFVGSWWLTFTIPSVMWL), 363-383 (VLLFLIAWFLLSDAVATISAT), 400-420 (ALLSIIATSSGIIGATVWPII), 431-451 (IIVCCLLLLELVPLYGLLGFL), 465-485 (WYEIYPLGIIHGMVMGGLSSY), 489-509 (FYGLLIPPGSEAAFYALFAIT), and 534-554 (AFGFLAVLIALPIPLIWMVDV). The disordered stretch occupies residues 575 to 598 (HEDFESFEGSSDGHEAEGLMRDHD). The span at 585–598 (SDGHEAEGLMRDHD) shows a compositional bias: basic and acidic residues.

Belongs to the ATG22 family.

Its subcellular location is the vacuole membrane. Its function is as follows. Vacuolar effluxer which mediate the efflux of amino acids resulting from autophagic degradation. The release of autophagic amino acids allows the maintenance of protein synthesis and viability during nitrogen starvation. In Sclerotinia sclerotiorum (strain ATCC 18683 / 1980 / Ss-1) (White mold), this protein is Autophagy-related protein 22-1 (atg22-1).